Here is a 152-residue protein sequence, read N- to C-terminus: Transcriptional regulator MraZ (152 aa).

SpoVT-AbrB domains follow at residues 5-52 (ATLV…PLPE) and 81-124 (ASEC…DETT).

The protein belongs to the MraZ family. As to quaternary structure, forms oligomers.

It localises to the cytoplasm. The protein resides in the nucleoid. Negatively regulates its own expression and that of the subsequent genes in the proximal part of the division and cell wall (dcw) gene cluster. Acts by binding directly to DNA. May also regulate the expression of genes outside the dcw cluster. The polypeptide is Transcriptional regulator MraZ (Salmonella typhi).